A 220-amino-acid chain; its full sequence is MDKHTAAIPTLTIKVVLLGESAVGKSSIVLRFVSDDFKESKEPTIGAAFLTKRITRDGKVIKFEIWDTAGQERFAPLAPMYYRNAQAALVVFDVTNEGSFYKAQNWVEELHEKVGHDIVIALVGNKMDLLNNDDENENRAMKAPAVQNLCERENLLYFEASAKTGENIYQIFQTLGEKVPCPEQNTRQSSTHDRTITDNQRIDLESTTVESTRETGGCNC.

Residues 19–26 (GESAVGKS), 67–71 (DTAGQ), and 125–128 (NKMD) contribute to the GTP site. 2 S-geranylgeranyl cysteine lipidation sites follow: Cys218 and Cys220. Residue Cys220 is modified to Cysteine methyl ester.

It belongs to the small GTPase superfamily. Rab family.

It is found in the cell membrane. In terms of biological role, required for transport in the endocytic pathway and for correct sorting of the vacuolar hydrolases suggesting a possible intersection of the endocytic with the vacuolar sorting pathway. May be involved in recruiting the MON1-CCZ1 complex to membranes enriched in phosphatidylinositol 3-phosphate (PtdIns[3]P) or other charged lipids, leading to recruitment of YPT7. In Saccharomyces cerevisiae (strain ATCC 204508 / S288c) (Baker's yeast), this protein is GTP-binding protein YPT53 (YPT53).